The chain runs to 579 residues: MMAVAAAQKNREMFAIKKSYSIENGYPSRRRSLVDDARFETLVVKQTKQTVLEEARSKANDDSLEDCIVQAQEHIPSEQDVELQDEHANLENLPLEEYVPVEEDVEFESVEQEQSESQSQEPEGNQQPTKNDYGLTEDEILLANAASESSDAEAAMQSAALVVRLKEGISSLGRILKAIETFHGTVQHVESRQSRVEGVDHDVLIKLDMTRGNLLQLIRSLRQSGSFSSMNLMADNNLNVKAPWFPKHASELDNCNHLMTKYEPDLDMNHPGFADKVYRQRRKEIAEIAFAYKYGDPIPFIDYSDVEVKTWRSVFKTVQDLAPKHACAEYRAAFQKLQDEQIFVETRLPQLQEMSDFLRKNTGFSLRPAAGLLTARDFLASLAFRIFQSTQYVRHVNSPYHTPEPDSIHELLGHMPLLADPSFAQFSQEIGLASLGASDEEIEKLSTVYWFTVEFGLCKEHGQIKAYGAGLLSSYGELLHAISDKCEHRAFEPASTAVQPYQDQEYQPIYYVAESFEDAKDKFRRWVSTMSRPFEVRFNPHTERVEVLDSVDKLETLVHQMNTEILHLTNAISKLRRPF.

Residues 105 to 114 (VEFESVEQEQ) show a composition bias toward acidic residues. The disordered stretch occupies residues 105-132 (VEFESVEQEQSESQSQEPEGNQQPTKND). Residues His-409, His-414, and Glu-454 each contribute to the Fe cation site.

Belongs to the biopterin-dependent aromatic amino acid hydroxylase family. It depends on Fe(2+) as a cofactor.

The protein resides in the cytoplasm. Its subcellular location is the perinuclear region. The protein localises to the cell projection. It is found in the axon. It carries out the reaction (6R)-L-erythro-5,6,7,8-tetrahydrobiopterin + L-tyrosine + O2 = (4aS,6R)-4a-hydroxy-L-erythro-5,6,7,8-tetrahydrobiopterin + L-dopa. It participates in catecholamine biosynthesis; dopamine biosynthesis; dopamine from L-tyrosine: step 1/2. Its activity is regulated as follows. Phosphorylation leads to an increase in the catalytic activity. Its function is as follows. Plays an important role in the physiology of adrenergic neurons. The chain is Tyrosine 3-monooxygenase (ple) from Drosophila melanogaster (Fruit fly).